A 558-amino-acid polypeptide reads, in one-letter code: Urocanate hydratase (558 aa).

NAD(+) contacts are provided by residues 53–54 (GG), Gln-131, 177–179 (GMG), Glu-197, Arg-202, 243–244 (NA), 264–268 (QTSAH), 274–275 (YL), and Tyr-323. Cys-411 is an active-site residue. An NAD(+)-binding site is contributed by Gly-493.

The protein belongs to the urocanase family. Requires NAD(+) as cofactor.

It localises to the cytoplasm. It catalyses the reaction 4-imidazolone-5-propanoate = trans-urocanate + H2O. Its pathway is amino-acid degradation; L-histidine degradation into L-glutamate; N-formimidoyl-L-glutamate from L-histidine: step 2/3. Functionally, catalyzes the conversion of urocanate to 4-imidazolone-5-propionate. This chain is Urocanate hydratase, found in Idiomarina loihiensis (strain ATCC BAA-735 / DSM 15497 / L2-TR).